The chain runs to 313 residues: Pre-mRNA-splicing factor 38A (313 aa).

The N-terminal protein interaction domain stretch occupies residues 1–179; it reads MANRTVKDAN…VLEEAELLDP (179 aa). Residues 172–201 adopt a coiled-coil conformation; the sequence is EEAELLDPRISALEEDLDEVETSEEEDDED. Residues 182-313 form a disordered region; sequence SALEEDLDEV…SHKRSRRGNE (132 aa). Over residues 184–202 the composition is skewed to acidic residues; sequence LEEDLDEVETSEEEDDEDE. The segment covering 203-224 has biased composition (basic and acidic residues); sequence KPERMQSPEPHRRSYRDMDRPR. Composition is skewed to basic residues over residues 225-250, 260-294, and 302-313; these read RSPSPRYRRSRSPRRRSRSPKRRSPS, HRSKSPRRHRSRSRERRHRSKSPGHHRSHRHRSHS, and KKSHKRSRRGNE.

It belongs to the PRP38 family. In terms of assembly, component of the spliceosome B complex.

The protein localises to the nucleus. Its function is as follows. Involved in pre-mRNA splicing as a component of the spliceosome. The polypeptide is Pre-mRNA-splicing factor 38A (prpf38a) (Danio rerio (Zebrafish)).